The sequence spans 369 residues: Iron-sulfur cluster carrier protein (369 aa).

G115–S122 lines the ATP pocket.

The protein belongs to the Mrp/NBP35 ATP-binding proteins family. Homodimer. Holo-ApbC forms a mixture of homodimers and homotetramers.

Functionally, binds and transfers iron-sulfur (Fe-S) clusters to target apoproteins. Can hydrolyze ATP. Both activities are required for function in vivo, but the ability to hydrolyze ATP is not necessary for Fe-S cluster transfer. The sequence is that of Iron-sulfur cluster carrier protein from Salmonella typhimurium (strain LT2 / SGSC1412 / ATCC 700720).